Consider the following 121-residue polypeptide: Small ribosomal subunit protein uS13 (121 aa).

The tract at residues 91–121 (HRRGLPVRGQKTKNNARTRKGPVKTVANKKK) is disordered.

It belongs to the universal ribosomal protein uS13 family. As to quaternary structure, part of the 30S ribosomal subunit. Forms a loose heterodimer with protein S19. Forms two bridges to the 50S subunit in the 70S ribosome.

In terms of biological role, located at the top of the head of the 30S subunit, it contacts several helices of the 16S rRNA. In the 70S ribosome it contacts the 23S rRNA (bridge B1a) and protein L5 of the 50S subunit (bridge B1b), connecting the 2 subunits; these bridges are implicated in subunit movement. Contacts the tRNAs in the A and P-sites. The sequence is that of Small ribosomal subunit protein uS13 from Staphylococcus aureus (strain Mu3 / ATCC 700698).